The primary structure comprises 83 residues: Putative defensin-like protein 257 (83 aa).

The N-terminal stretch at 1 to 25 (MMNVSLKLSFLVFILVIMSNLGSEA) is a signal peptide. Disulfide bonds link Cys-57-Cys-73, Cys-63-Cys-80, and Cys-67-Cys-82.

Belongs to the DEFL family.

It localises to the secreted. This chain is Putative defensin-like protein 257, found in Arabidopsis thaliana (Mouse-ear cress).